Reading from the N-terminus, the 146-residue chain is Regulator of ribonuclease activity B (146 aa).

The disordered stretch occupies residues 110-146 (WGTYFEDPDGEEEEGDEFDQDDEDGPADRDEVPATRH). The segment covering 115–134 (EDPDGEEEEGDEFDQDDEDG) has biased composition (acidic residues). Positions 135–146 (PADRDEVPATRH) are enriched in basic and acidic residues.

Belongs to the RraB family. As to quaternary structure, interacts with the C-terminal region of Rne.

It is found in the cytoplasm. In terms of biological role, globally modulates RNA abundance by binding to RNase E (Rne) and regulating its endonucleolytic activity. Can modulate Rne action in a substrate-dependent manner by altering the composition of the degradosome. This is Regulator of ribonuclease activity B from Sodalis glossinidius (strain morsitans).